Here is a 60-residue protein sequence, read N- to C-terminus: Protein CADMIUM TOLERANCE 4 (60 aa).

A helical transmembrane segment spans residues glycine 26 to tyrosine 42.

The protein belongs to the CYSTM1 family. In terms of tissue distribution, mainly expressed in shoots, and, to a lower extent, in roots.

Its subcellular location is the cell membrane. The protein localises to the secreted. It is found in the cell wall. Confers resistance to heavy metal ions (e.g. aluminium (Al)) by chelating them at the plasma membrane of root cells, thus stopping their entry and reducing their accumulation. The protein is Protein CADMIUM TOLERANCE 4 of Oryza sativa subsp. japonica (Rice).